A 100-amino-acid chain; its full sequence is Protein Tat (100 aa).

The segment at 1-24 is interaction with human CREBBP; it reads MDPIDPDLEPWKHPGSQPRTVCNN. The transactivation stretch occupies residues 1 to 48; sequence MDPIDPDLEPWKHPGSQPRTVCNNCYCKACCYHCIYCFTKKGLGISYG. Positions 22, 25, and 27 each coordinate Zn(2+). Residues 22–37 form a cysteine-rich region; the sequence is CNNCYCKACCYHCIYC. Lysine 28 is modified (N6-acetyllysine; by host PCAF). Cysteine 30, histidine 33, cysteine 34, and cysteine 37 together coordinate Zn(2+). Positions 38 to 48 are core; that stretch reads FTKKGLGISYG. A compositionally biased stretch (basic residues) spans 48-58; that stretch reads GRKKRTTRRRT. A disordered region spans residues 48 to 100; sequence GRKKRTTRRRTAPAGSKNNQDSIPKQPLSQSRGNKEGSEKSTKEVASKTEADQ. Positions 49–57 match the Nuclear localization signal, RNA-binding (TAR), and protein transduction motif; sequence RKKRTTRRR. Positions 49–87 are interaction with the host capping enzyme RNGTT; the sequence is RKKRTTRRRTAPAGSKNNQDSIPKQPLSQSRGNKEGSEK. 2 positions are modified to N6-acetyllysine; by host EP300 and GCN5L2: lysine 50 and lysine 51. Arginine 52 carries the post-translational modification Asymmetric dimethylarginine; by host PRMT6. A compositionally biased stretch (polar residues) spans 63–79; the sequence is SKNNQDSIPKQPLSQSR. A Glycyl lysine isopeptide (Lys-Gly) (interchain with G-Cter in ubiquitin) cross-link involves residue lysine 72. Residues 80-100 show a composition bias toward basic and acidic residues; sequence GNKEGSEKSTKEVASKTEADQ.

This sequence belongs to the lentiviruses Tat family. In terms of assembly, interacts with host CCNT1. Associates with the P-TEFb complex composed at least of Tat, P-TEFb (CDK9 and CCNT1), TAR RNA, RNA Pol II. Recruits the HATs CREBBP, TAF1/TFIID, EP300, PCAF and GCN5L2. Interacts with host KAT5/Tip60; this interaction targets the latter to degradation. Interacts with the host deacetylase SIRT1. Interacts with host capping enzyme RNGTT; this interaction stimulates RNGTT. Binds to host KDR, and to the host integrins ITGAV/ITGB3 and ITGA5/ITGB1. Interacts with host KPNB1/importin beta-1 without previous binding to KPNA1/importin alpha-1. Interacts with EIF2AK2. Interacts with host nucleosome assembly protein NAP1L1; this interaction may be required for the transport of Tat within the nucleus, since the two proteins interact at the nuclear rim. Interacts with host C1QBP/SF2P32; this interaction involves lysine-acetylated Tat. Interacts with the host chemokine receptors CCR2, CCR3 and CXCR4. Interacts with host DPP4/CD26; this interaction may trigger an anti-proliferative effect. Interacts with host LDLR. Interacts with the host extracellular matrix metalloproteinase MMP1. Interacts with host PRMT6; this interaction mediates Tat's methylation. Interacts with, and is ubiquitinated by MDM2/Hdm2. Interacts with host PSMC3 and HTATIP2. Interacts with STAB1; this interaction may overcome SATB1-mediated repression of IL2 and IL2RA (interleukin) in T cells by binding to the same domain than HDAC1. Interacts (when acetylated) with human CDK13, thereby increasing HIV-1 mRNA splicing and promoting the production of the doubly spliced HIV-1 protein Nef. Interacts with host TBP; this interaction modulates the activity of transcriptional pre-initiation complex. Interacts with host RELA. In terms of processing, asymmetrical arginine methylation by host PRMT6 seems to diminish the transactivation capacity of Tat and affects the interaction with host CCNT1. Post-translationally, acetylation by EP300, CREBBP, GCN5L2/GCN5 and PCAF regulates the transactivation activity of Tat. EP300-mediated acetylation of Lys-50 promotes dissociation of Tat from the TAR RNA through the competitive binding to PCAF's bromodomain. In addition, the non-acetylated Tat's N-terminus can also interact with PCAF. PCAF-mediated acetylation of Lys-28 enhances Tat's binding to CCNT1. Lys-50 is deacetylated by SIRT1. Polyubiquitination by host MDM2 does not target Tat to degradation, but activates its transactivation function and fosters interaction with CCNT1 and TAR RNA. In terms of processing, phosphorylated by EIF2AK2 on serine and threonine residues adjacent to the basic region important for TAR RNA binding and function. Phosphorylation of Tat by EIF2AK2 is dependent on the prior activation of EIF2AK2 by dsRNA.

The protein resides in the host nucleus. It is found in the host nucleolus. Its subcellular location is the host cytoplasm. The protein localises to the secreted. Its function is as follows. Transcriptional activator that increases RNA Pol II processivity, thereby increasing the level of full-length viral transcripts. Recognizes a hairpin structure at the 5'-LTR of the nascent viral mRNAs referred to as the transactivation responsive RNA element (TAR) and recruits the cyclin T1-CDK9 complex (P-TEFb complex) that will in turn hyperphosphorylate the RNA polymerase II to allow efficient elongation. The CDK9 component of P-TEFb and other Tat-activated kinases hyperphosphorylate the C-terminus of RNA Pol II that becomes stabilized and much more processive. Other factors such as HTATSF1/Tat-SF1, SUPT5H/SPT5, and HTATIP2 are also important for Tat's function. Besides its effect on RNA Pol II processivity, Tat induces chromatin remodeling of proviral genes by recruiting the histone acetyltransferases (HATs) CREBBP, EP300 and PCAF to the chromatin. This also contributes to the increase in proviral transcription rate, especially when the provirus integrates in transcriptionally silent region of the host genome. To ensure maximal activation of the LTR, Tat mediates nuclear translocation of NF-kappa-B by interacting with host RELA. Through its interaction with host TBP, Tat may also modulate transcription initiation. Tat can reactivate a latently infected cell by penetrating in it and transactivating its LTR promoter. In the cytoplasm, Tat is thought to act as a translational activator of HIV-1 mRNAs. In terms of biological role, extracellular circulating Tat can be endocytosed by surrounding uninfected cells via the binding to several surface receptors such as CD26, CXCR4, heparan sulfate proteoglycans (HSPG) or LDLR. Neurons are rarely infected, but they internalize Tat via their LDLR. Through its interaction with nuclear HATs, Tat is potentially able to control the acetylation-dependent cellular gene expression. Modulates the expression of many cellular genes involved in cell survival, proliferation or in coding for cytokines or cytokine receptors. Tat plays a role in T-cell and neurons apoptosis. Tat induced neurotoxicity and apoptosis probably contribute to neuroAIDS. Circulating Tat also acts as a chemokine-like and/or growth factor-like molecule that binds to specific receptors on the surface of the cells, affecting many cellular pathways. In the vascular system, Tat binds to ITGAV/ITGB3 and ITGA5/ITGB1 integrins dimers at the surface of endothelial cells and competes with bFGF for heparin-binding sites, leading to an excess of soluble bFGF. The sequence is that of Protein Tat from Pan (chimpanzees).